A 327-amino-acid polypeptide reads, in one-letter code: HTH-type transcriptional regulator EbgR (327 aa).

The HTH lacI-type domain maps to 1–57 (MATLKDIAIEAGVSLATVSRVLNDDPTLNVKEETKHRILEIAEKLEYKTSSARKLQT). Positions 4–23 (LKDIAIEAGVSLATVSRVLN) form a DNA-binding region, H-T-H motif.

In terms of biological role, repressor for beta galactosidase alpha and beta subunits (ebgA and ebgC). Binds lactose as an inducer. This is HTH-type transcriptional regulator EbgR (ebgR) from Escherichia coli (strain K12).